Consider the following 160-residue polypeptide: Outer membrane protein MT2024.1 (160 aa).

A signal peptide spans 1–22 (MSWSRVIAYGLLPGLALALTCG).

The protein localises to the cell outer membrane. The protein is Outer membrane protein MT2024.1 of Mycobacterium tuberculosis (strain CDC 1551 / Oshkosh).